We begin with the raw amino-acid sequence, 294 residues long: uncharacterized protein (294 aa).

The next 3 helical transmembrane spans lie at Ala-21–Phe-41, Pro-51–Ala-71, and Ile-77–Phe-97. The tract at residues His-156 to Ile-176 is disordered. Residues Glu-184–Ser-215 are a coiled coil. Basic and acidic residues predominate over residues Gln-265–Phe-277. A disordered region spans residues Gln-265–Asn-294.

It is found in the mitochondrion membrane. This is an uncharacterized protein from Arabidopsis thaliana (Mouse-ear cress).